We begin with the raw amino-acid sequence, 226 residues long: UPF0502 protein azo0627 (226 aa).

The protein belongs to the UPF0502 family.

The protein is UPF0502 protein azo0627 of Azoarcus sp. (strain BH72).